Here is a 348-residue protein sequence, read N- to C-terminus: Protein RecA (348 aa).

Residue 66-73 (GPESSGKT) coordinates ATP.

Belongs to the RecA family.

It is found in the cytoplasm. Its function is as follows. Can catalyze the hydrolysis of ATP in the presence of single-stranded DNA, the ATP-dependent uptake of single-stranded DNA by duplex DNA, and the ATP-dependent hybridization of homologous single-stranded DNAs. It interacts with LexA causing its activation and leading to its autocatalytic cleavage. This is Protein RecA from Neisseria meningitidis serogroup B (strain ATCC BAA-335 / MC58).